The following is a 257-amino-acid chain: Small ribosomal subunit protein uS2 (257 aa).

This sequence belongs to the universal ribosomal protein uS2 family.

The chain is Small ribosomal subunit protein uS2 from Bartonella quintana (strain Toulouse) (Rochalimaea quintana).